The primary structure comprises 608 residues: Afamin (608 aa).

Positions 1 to 21 are cleaved as a signal peptide; the sequence is MRHLKLTGFIFFLLPLTESLA. Albumin domains are found at residues 22–210, 211–403, and 404–599; these read LPTK…APIT, QYLK…KFNE, and TTQR…KTGD. N-linked (GlcNAc...) asparagine glycosylation occurs at Asn-33. Intrachain disulfides connect Cys-77/Cys-86, Cys-99/Cys-114, Cys-113/Cys-124, Cys-148/Cys-193, Cys-192/Cys-201, Cys-224/Cys-270, Cys-269/Cys-277, Cys-289/Cys-303, Cys-302/Cys-313, Cys-340/Cys-385, and Cys-384/Cys-393. Residue Asn-109 is glycosylated (N-linked (GlcNAc...) asparagine). Asn-153 carries an N-linked (GlcNAc...) asparagine glycan. The interval 215–319 is binding pocket for hydrophobic ligands; the sequence is ASSSYQRNVC…REACIINANK (105 aa). Asn-402 carries an N-linked (GlcNAc...) asparagine glycan. 5 cysteine pairs are disulfide-bonded: Cys-416–Cys-462, Cys-461–Cys-470, Cys-483–Cys-499, Cys-498–Cys-509, and Cys-580–Cys-589. N-linked (GlcNAc...) asparagine glycosylation occurs at Asn-488. The segment at 583–608 is disordered; the sequence is VQEPESCFSPESSKTGDESQATEKQR. Over residues 596–608 the composition is skewed to basic and acidic residues; sequence KTGDESQATEKQR.

The protein belongs to the ALB/AFP/VDB family. In terms of assembly, forms a 1:1 complex with Wnt family members; interacts with WNT1, WNT2B, WNT3, WNT5A, WNT7A, WNT7B, WNT8, WNT9A, WNT9B, WNT10A and WNT10B. Interacts with WNT3A. In terms of processing, N-glycosylated; more than 90% of the glycans are sialylated. In terms of tissue distribution, detected in brain, especially on brain capillaries (at protein level). Expressed in isolated brain capillaries.

The protein localises to the secreted. Functions as a carrier for hydrophobic molecules in body fluids. Essential for the solubility and activity of lipidated Wnt family members, including WNT1, WNT2B, WNT3, WNT3A, WNT5A, WNT7A, WNT7B, WNT8, WNT9A, WNT9B, WNT10A and WNT10B. Binds vitamin E. May transport vitamin E in body fluids under conditions where the lipoprotein system is not sufficient. May be involved in the transport of vitamin E across the blood-brain barrier. The chain is Afamin (Afm) from Mus musculus (Mouse).